The primary structure comprises 501 residues: Glycerol kinase (501 aa).

Thr12 is a binding site for ADP. 3 residues coordinate ATP: Thr12, Thr13, and Ser14. Thr12 contacts sn-glycerol 3-phosphate. Residue Arg16 coordinates ADP. Residues Arg82, Glu83, Tyr134, and Asp244 each coordinate sn-glycerol 3-phosphate. Glycerol is bound by residues Arg82, Glu83, Tyr134, Asp244, and Gln245. ADP contacts are provided by Thr266 and Gly310. Residues Thr266, Gly310, Gln314, and Gly411 each coordinate ATP. ADP-binding residues include Gly411 and Asn415.

This sequence belongs to the FGGY kinase family.

It catalyses the reaction glycerol + ATP = sn-glycerol 3-phosphate + ADP + H(+). It participates in polyol metabolism; glycerol degradation via glycerol kinase pathway; sn-glycerol 3-phosphate from glycerol: step 1/1. With respect to regulation, inhibited by fructose 1,6-bisphosphate (FBP). Key enzyme in the regulation of glycerol uptake and metabolism. Catalyzes the phosphorylation of glycerol to yield sn-glycerol 3-phosphate. This chain is Glycerol kinase, found in Methylorubrum extorquens (strain PA1) (Methylobacterium extorquens).